Reading from the N-terminus, the 123-residue chain is Small ribosomal subunit protein uS13 (123 aa).

Positions P97–K123 are disordered. A compositionally biased stretch (basic residues) spans Q101 to K123.

The protein belongs to the universal ribosomal protein uS13 family. As to quaternary structure, part of the 30S ribosomal subunit. Forms a loose heterodimer with protein S19. Forms two bridges to the 50S subunit in the 70S ribosome.

Its function is as follows. Located at the top of the head of the 30S subunit, it contacts several helices of the 16S rRNA. In the 70S ribosome it contacts the 23S rRNA (bridge B1a) and protein L5 of the 50S subunit (bridge B1b), connecting the 2 subunits; these bridges are implicated in subunit movement. Contacts the tRNAs in the A and P-sites. This is Small ribosomal subunit protein uS13 from Fervidobacterium nodosum (strain ATCC 35602 / DSM 5306 / Rt17-B1).